The chain runs to 217 residues: Probable cutinase 3 (217 aa).

The signal sequence occupies residues 1–17; that stretch reads MSLRSLFVAGLATLALA. Disulfide bonds link Cys39/Cys118 and Cys65/Cys79. Catalysis depends on Ser129, which acts as the Nucleophile. Cysteines 180 and 187 form a disulfide. Asp184 is a catalytic residue. His197 functions as the Proton donor/acceptor in the catalytic mechanism.

The protein belongs to the cutinase family.

It localises to the secreted. The catalysed reaction is cutin + H2O = cutin monomers.. Catalyzes the hydrolysis of complex carboxylic polyesters found in the cell wall of plants. Degrades cutin, a macromolecule that forms the structure of the plant cuticle. The sequence is that of Probable cutinase 3 from Aspergillus fumigatus (strain CBS 144.89 / FGSC A1163 / CEA10) (Neosartorya fumigata).